The primary structure comprises 357 residues: Neurogenic differentiation factor 1 (357 aa).

The interval 1–94 is disordered; it reads MTKSYSESGL…GPKKKKMTKA (94 aa). Residues 58–78 are compositionally biased toward acidic residues; that stretch reads EEEDEDEDLEEEEEEEEEEDD. Over residues 81-93 the composition is skewed to basic residues; sequence PKRRGPKKKKMTK. The Nuclear localization signal motif lies at 87-93; the sequence is KKKKMTK. Residues 101 to 153 enclose the bHLH domain; the sequence is LRRMKANARERNRMHGLNAALDNLRKVVPCYSKTQKLSKIETLRLAKNYIWAL. 4 positions are modified to phosphoserine: serine 162, serine 259, serine 266, and serine 274. Serine 336 carries the post-translational modification Phosphoserine; by CaMK2.

Efficient DNA-binding requires dimerization with another bHLH protein. Heterodimer with TCF3/E47; the heterodimer is inhibited in presence of ID2, but not NR0B2, to E-box element. Interacts with EP300; the interaction is inhibited by NR0B2. Interacts with RREB1. Interacts with ATOH8. Phosphorylated by MAPK1; phosphorylation regulates heterodimerization and DNA-binding activities. Phosphorylation on Ser-266 and Ser-274 increases transactivation on the insulin promoter in glucose-stimulated insulinoma cells. Phosphorylated. In islet cells, phosphorylated on Ser-274 upon glucose stimulation; which may be required for nuclear localization. In activated neurons, phosphorylated on Ser-336 by CaMK2; which promotes dendritic growth.

It localises to the cytoplasm. It is found in the nucleus. Functionally, acts as a transcriptional activator: mediates transcriptional activation by binding to E box-containing promoter consensus core sequences 5'-CANNTG-3'. Associates with the p300/CBP transcription coactivator complex to stimulate transcription of the secretin gene as well as the gene encoding the cyclin-dependent kinase inhibitor CDKN1A. Contributes to the regulation of several cell differentiation pathways, like those that promote the formation of early retinal ganglion cells, inner ear sensory neurons, granule cells forming either the cerebellum or the dentate gyrus cell layer of the hippocampus, endocrine islet cells of the pancreas and enteroendocrine cells of the small intestine. Together with PAX6 or SIX3, is required for the regulation of amacrine cell fate specification. Also required for dendrite morphogenesis and maintenance in the cerebellar cortex. Associates with chromatin to enhancer regulatory elements in genes encoding key transcriptional regulators of neurogenesis. The protein is Neurogenic differentiation factor 1 (Neurod1) of Rattus norvegicus (Rat).